The sequence spans 485 residues: Ras-like GTPase YcjX (485 aa).

A Walker A motif motif is present at residues 33 to 40 (GLSGAGKT). The GTP site is built by Ser-35, Gly-36, Gly-38, Lys-39, Thr-40, Ala-41, Trp-110, Ser-113, Thr-114, Arg-115, Lys-355, Asp-357, and His-358. GDP is bound by residues Gly-36, Gly-38, Lys-39, Thr-40, Ala-41, Trp-110, Ser-113, and Thr-114. The GDP site is built by Lys-355, Asp-357, His-358, Ser-395, Ala-396, and Ile-397. Position 397 (Ile-397) interacts with GTP.

Monomer in solution. Mg(2+) serves as cofactor.

The enzyme catalyses GTP + H2O = GDP + phosphate + H(+). Its activity is regulated as follows. Alternates between an inactive form bound to GDP and an active form bound to GTP. Likely activated by a guanine nucleotide-exchange factor (GEF). Binds GTP and GDP. Has intrinsic GTPase activity. Does not hydrolyze ATP. May act as a transducer of stress responses. This chain is Ras-like GTPase YcjX, found in Shewanella oneidensis (strain ATCC 700550 / JCM 31522 / CIP 106686 / LMG 19005 / NCIMB 14063 / MR-1).